We begin with the raw amino-acid sequence, 521 residues long: Pentatricopeptide repeat-containing protein At4g26680, mitochondrial (521 aa).

The N-terminal 38 residues, M1 to N38, are a transit peptide targeting the mitochondrion. PPR repeat units follow at residues T167–P201, T202–P236, N237–A271, T272–P306, N307–P341, N342–R376, D377–P411, N412–P446, N447–L481, and D482–Q516.

It belongs to the PPR family. P subfamily.

Its subcellular location is the mitochondrion. The sequence is that of Pentatricopeptide repeat-containing protein At4g26680, mitochondrial from Arabidopsis thaliana (Mouse-ear cress).